The chain runs to 185 residues: uncharacterized protein (185 aa).

2 helical membrane passes run 1-19 (MLNI…TSSA) and 105-125 (AGFI…TMDV).

The protein localises to the membrane. This is an uncharacterized protein from Caenorhabditis elegans.